A 185-amino-acid polypeptide reads, in one-letter code: Shikimate kinase (185 aa).

21–26 (GVGKTT) is a binding site for ATP. Residue Thr25 coordinates Mg(2+). Substrate-binding residues include Asp43, Arg67, and Gly90. Position 129 (Arg129) interacts with ATP. Arg147 lines the substrate pocket.

This sequence belongs to the shikimate kinase family. As to quaternary structure, monomer. Requires Mg(2+) as cofactor.

Its subcellular location is the cytoplasm. The enzyme catalyses shikimate + ATP = 3-phosphoshikimate + ADP + H(+). It functions in the pathway metabolic intermediate biosynthesis; chorismate biosynthesis; chorismate from D-erythrose 4-phosphate and phosphoenolpyruvate: step 5/7. Functionally, catalyzes the specific phosphorylation of the 3-hydroxyl group of shikimic acid using ATP as a cosubstrate. The protein is Shikimate kinase of Bacillus pumilus (strain SAFR-032).